Reading from the N-terminus, the 49-residue chain is Large ribosomal subunit protein bL33B (49 aa).

This sequence belongs to the bacterial ribosomal protein bL33 family.

The polypeptide is Large ribosomal subunit protein bL33B (rpmG2) (Lactococcus lactis subsp. lactis (strain IL1403) (Streptococcus lactis)).